The chain runs to 37 residues: Large ribosomal subunit protein bL36c (37 aa).

Belongs to the bacterial ribosomal protein bL36 family.

It is found in the plastid. It localises to the chloroplast. In Liriodendron tulipifera (Tuliptree), this protein is Large ribosomal subunit protein bL36c.